The following is a 201-amino-acid chain: FMN-dependent NADH:quinone oxidoreductase (201 aa).

Residues S10, 16 to 18 (SQS), 96 to 99 (MYNF), and 140 to 143 (SRGG) each bind FMN.

This sequence belongs to the azoreductase type 1 family. In terms of assembly, homodimer. FMN is required as a cofactor.

It catalyses the reaction 2 a quinone + NADH + H(+) = 2 a 1,4-benzosemiquinone + NAD(+). It carries out the reaction N,N-dimethyl-1,4-phenylenediamine + anthranilate + 2 NAD(+) = 2-(4-dimethylaminophenyl)diazenylbenzoate + 2 NADH + 2 H(+). Quinone reductase that provides resistance to thiol-specific stress caused by electrophilic quinones. Its function is as follows. Also exhibits azoreductase activity. Catalyzes the reductive cleavage of the azo bond in aromatic azo compounds to the corresponding amines. This is FMN-dependent NADH:quinone oxidoreductase from Shigella boydii serotype 4 (strain Sb227).